Reading from the N-terminus, the 428-residue chain is Tol-Pal system protein TolB (428 aa).

The N-terminal stretch at 1-23 (MRRLYQTVCTLALLLVGLQAAHA) is a signal peptide.

This sequence belongs to the TolB family. In terms of assembly, the Tol-Pal system is composed of five core proteins: the inner membrane proteins TolA, TolQ and TolR, the periplasmic protein TolB and the outer membrane protein Pal. They form a network linking the inner and outer membranes and the peptidoglycan layer.

Its subcellular location is the periplasm. In terms of biological role, part of the Tol-Pal system, which plays a role in outer membrane invagination during cell division and is important for maintaining outer membrane integrity. The chain is Tol-Pal system protein TolB from Alkalilimnicola ehrlichii (strain ATCC BAA-1101 / DSM 17681 / MLHE-1).